We begin with the raw amino-acid sequence, 758 residues long: Relaxin receptor 1 (758 aa).

Residues 1–408 lie on the Extracellular side of the membrane; that stretch reads MTSGPFFFCV…LENLLASIIQ (408 aa). The LDL-receptor class A domain maps to 26 to 63; that stretch reads SCPLGSFPCGNISKCLPQLLHCNGVDDCGNQADEDNCG. Disulfide bonds link Cys-27–Cys-40, Cys-34–Cys-53, and Cys-47–Cys-62. A glycan (N-linked (GlcNAc...) asparagine) is linked at Asn-36. Ca(2+) contacts are provided by Leu-45, Asn-48, Val-50, Asp-52, Asp-58, and Glu-59. LRR repeat units follow at residues 105–125, 126–148, 149–172, 173–196, 198–220, 221–244, 246–269, 270–293, 294–317, 319–341, and 342–365; these read LCRD…PSVS, SNVT…SFRK, YHDL…AFRG, LHSL…VFED, HRLE…TFYG, LNSL…PLCQ, MPRL…TFIS, CNNL…AFTH, LQKL…IFKD, KELS…QFDY, and LAKL…MFRP. Residue Asn-127 is glycosylated (N-linked (GlcNAc...) asparagine). Residues Asn-264 and Asn-272 are each glycosylated (N-linked (GlcNAc...) asparagine). N-linked (GlcNAc...) asparagine glycosylation occurs at Asn-325. An N-linked (GlcNAc...) asparagine glycan is attached at Asn-368. Residues 409-429 form a helical membrane-spanning segment; the sequence is RVFVWVVSAITCFGNIFVICM. At 430-443 the chain is on the cytoplasmic side; sequence RPYIRSENKLHAMS. A helical membrane pass occupies residues 444–464; that stretch reads IMSLCCADCLMGVYLFVIGAF. At 465–486 the chain is on the extracellular side; that stretch reads DLKFRGEYRKHAQPWMESVHCQ. The cysteines at positions 485 and 563 are disulfide-linked. The helical transmembrane segment at 487–507 threads the bilayer; that stretch reads FMGSLAVLSTEVSVLLLTFLT. Residues 508–527 are Cytoplasmic-facing; it reads LEKYICIVYPFRCLRPRKCR. The chain crosses the membrane as a helical span at residues 528–548; the sequence is TVAVLIFIWITGFIVAFAPLG. Over 549 to 577 the chain is Extracellular; it reads NKEFFKNYYGTNGVCFPLHSEDTGSTGAQ. The chain crosses the membrane as a helical span at residues 578–598; that stretch reads IYSVVIFLGINLVAFIIIVFS. The Cytoplasmic portion of the chain corresponds to 599-629; the sequence is YGSMFYSVHQSTITATEIQKQVKKEMILAKR. A helical transmembrane segment spans residues 630-650; sequence FFFIVFTDALCWIPIFILKFL. Residues 651 to 660 lie on the Extracellular side of the membrane; it reads SLIRVEIPDT. A helical transmembrane segment spans residues 661-681; that stretch reads ITSWVVIFILPINSALNPIIY. The Cytoplasmic segment spans residues 682–758; sequence TLTTRPFKEM…SRSSRLNSYS (77 aa).

Belongs to the G-protein coupled receptor 1 family. Interacts with C1QTNF8. Detected in brain cortex, and at low levels in testis.

Its subcellular location is the cell membrane. In terms of biological role, receptor for relaxins. The activity of this receptor is mediated by G proteins leading to stimulation of adenylate cyclase and an increase of cAMP. Binding of the ligand may also activate a tyrosine kinase pathway that inhibits the activity of a phosphodiesterase that degrades cAMP. In Rattus norvegicus (Rat), this protein is Relaxin receptor 1 (Rxfp1).